The primary structure comprises 328 residues: MSLRFALTPGEPAGIGPDLCLLLARSAQPHPLIAIASRTLLQERAGQLGLAIDLKDVSPAAWPERPAKAGQLYVWDTPLAAPVRPGQLDRANAAYVLETLTRAGQGCLDGHFAGMITAPVHKGVINEAGIPFSGHTEFLADLTHTAQVVMMLATRGLRVALATTHLPLREVADAISDERLTRVARILHADLRDKFGIAHPRILVCGLNPHAGEGGHLGREEIEVIEPCLERLRGEGLDLIGPLPADTLFTPKHLEHCDAVLAMYHDQGLPVLKYKGFGAAVNVTLGLPIIRTSVDHGTALDLAGSGRIDSGSLQVALETAYQMAASRC.

Substrate is bound by residues H135 and T136. H165, H210, and H265 together coordinate a divalent metal cation. Residues K273, N282, and R291 each contribute to the substrate site.

It belongs to the PdxA family. As to quaternary structure, homodimer. Zn(2+) is required as a cofactor. The cofactor is Mg(2+). Requires Co(2+) as cofactor.

The protein localises to the cytoplasm. It catalyses the reaction 4-(phosphooxy)-L-threonine + NAD(+) = 3-amino-2-oxopropyl phosphate + CO2 + NADH. The protein operates within cofactor biosynthesis; pyridoxine 5'-phosphate biosynthesis; pyridoxine 5'-phosphate from D-erythrose 4-phosphate: step 4/5. Functionally, catalyzes the NAD(P)-dependent oxidation of 4-(phosphooxy)-L-threonine (HTP) into 2-amino-3-oxo-4-(phosphooxy)butyric acid which spontaneously decarboxylates to form 3-amino-2-oxopropyl phosphate (AHAP). The polypeptide is 4-hydroxythreonine-4-phosphate dehydrogenase (Pseudomonas aeruginosa (strain ATCC 15692 / DSM 22644 / CIP 104116 / JCM 14847 / LMG 12228 / 1C / PRS 101 / PAO1)).